We begin with the raw amino-acid sequence, 334 residues long: Ornithine carbamoyltransferase, catabolic (334 aa).

Carbamoyl phosphate-binding positions include 57–60 (STRT), Gln84, Arg108, and 135–138 (HPTQ). L-ornithine is bound by residues Asn169, Asp233, and 237–238 (SM). Carbamoyl phosphate is bound by residues 275-276 (CL) and Arg320.

The protein belongs to the aspartate/ornithine carbamoyltransferase superfamily. OTCase family.

It is found in the cytoplasm. It catalyses the reaction carbamoyl phosphate + L-ornithine = L-citrulline + phosphate + H(+). It functions in the pathway amino-acid degradation; L-arginine degradation via ADI pathway; carbamoyl phosphate from L-arginine: step 2/2. Functionally, reversibly catalyzes the transfer of the carbamoyl group from carbamoyl phosphate (CP) to the N(epsilon) atom of ornithine (ORN) to produce L-citrulline. This is Ornithine carbamoyltransferase, catabolic (arcB) from Salmonella typhimurium (strain LT2 / SGSC1412 / ATCC 700720).